An 804-amino-acid polypeptide reads, in one-letter code: Exocyst complex component 6 (804 aa).

Belongs to the SEC15 family. In terms of assembly, the exocyst complex is composed of EXOC1, EXOC2, EXOC3, EXOC4, EXOC5, EXOC6, EXOC7 and EXOC8. Interacts with CNTRL. Interacts with RAB11A in a GTP-dependent manner.

It localises to the cytoplasm. The protein localises to the perinuclear region. The protein resides in the cell projection. Its subcellular location is the growth cone. It is found in the midbody. It localises to the midbody ring. In terms of biological role, component of the exocyst complex involved in the docking of exocytic vesicles with fusion sites on the plasma membrane. Together with RAB11A, RAB3IP, RAB8A, PARD3, PRKCI, ANXA2, CDC42 and DNMBP promotes transcytosis of PODXL to the apical membrane initiation sites (AMIS), apical surface formation and lumenogenesis. The sequence is that of Exocyst complex component 6 (Exoc6) from Rattus norvegicus (Rat).